We begin with the raw amino-acid sequence, 1239 residues long: Potassium channel subfamily T member 1 (1239 aa).

The interval 1-45 is disordered; the sequence is MARAKLPRSPSEGKAGPGDTPAGSAAPEEPHGLSPLLPTRGGGSV. At 1–93 the chain is on the cytoplasmic side; it reads MARAKLPRSP…LFFIKNQRSS (93 aa). A helical transmembrane segment spans residues 94-126; sequence LRIRLFNFSLKLLTCLLYIVRVLLDNPDQGIGC. Topologically, residues 127 to 153 are extracellular; sequence WGCTKYNYTFNGSSSEFHWAPILWVER. Asparagine 133 and asparagine 137 each carry an N-linked (GlcNAc...) asparagine glycan. Residues 154 to 178 traverse the membrane as a helical segment; it reads KMALWVIQVIVATISFLETMLLIYL. Residues 179-192 lie on the Cytoplasmic side of the membrane; it reads SYKGNIWEQIFHVS. The helical transmembrane segment at 193–208 threads the bilayer; the sequence is FVLEMINTLPFIITVF. Residues 209 to 215 are Extracellular-facing; sequence WPPLRNL. A helical transmembrane segment spans residues 216–233; it reads FIPVFLNCWLAKHALENM. The Cytoplasmic portion of the chain corresponds to 234–246; the sequence is INDFHRAILRTQS. Residues 247–274 form a helical membrane-spanning segment; that stretch reads AMFNQVLILFCTLLCLVFTGTCGIQHLE. At 275–281 the chain is on the extracellular side; it reads RAGGNLN. An intramembrane region (pore-forming) is located at residues 282–302; the sequence is LLTSFYFCIVTFSTVGFGDVT. K(+)-binding residues include valine 296 and glycine 297. Residues 303 to 304 are Extracellular-facing; it reads PK. Residues 305–338 traverse the membrane as a helical segment; that stretch reads IWPSQLLVVILICVTLVVLPLQFEELVYLWMERQ. At 339–1239 the chain is on the cytoplasmic side; that stretch reads KSGGNYSRHR…NPETRDETQL (901 aa). The RCK N-terminal 1 domain occupies 352–488; it reads EKHVVLCVSS…FHVKFADHVV (137 aa). The Na(+) site is built by leucine 513, histidine 516, serine 538, and asparagine 540. Positions 658–689 are disordered; that stretch reads QNTDCRPSQGGSGGGGGKLTLPTENGSGSRRP. 2 residues coordinate Zn(2+): cysteine 758 and cysteine 759. K(+) contacts are provided by arginine 761 and lysine 764. Na(+) contacts are provided by arginine 761 and lysine 764. Zn(2+) contacts are provided by cysteine 766 and histidine 768. Residues asparagine 769, tyrosine 771, tyrosine 777, and glycine 778 each contribute to the K(+) site. Tyrosine 771 lines the Na(+) pocket. Phenylalanine 779 is a binding site for Na(+). Residues 781–921 form the RCK N-terminal 2 domain; sequence NKLIIVSAET…QFRAKDSYSL (141 aa). K(+)-binding residues include serine 787, leucine 818, aspartate 820, glycine 842, and aspartate 865. 2 disordered regions span residues 1053–1081 and 1212–1239; these read REAK…ADPV and TSSS…ETQL. The segment covering 1213–1230 has biased composition (low complexity); the sequence is SSSQSRKSSCSNKLSSCN.

This sequence belongs to the potassium channel family. Calcium-activated (TC 1.A.1.3) subfamily. KCa4.1/KCNT1 sub-subfamily. Homotetramer; which constitutes the Na(+)-activated K(+) channel. Interacts with KCNT2; these heterodimer channels differ from the homomers in their unitary conductance, kinetic behavior, subcellular localization, and response to activation of protein kinase C. Interacts (via C-terminus) with FMR1; this interaction alters gating properties of KCNT1. Interacts with CRBN via its cytoplasmic C-terminus. As to quaternary structure, does not interact with KCNT2. In terms of processing, phosphorylated by protein kinase C. Phosphorylation of the C-terminal domain increases channel activity. Detected in brain and brainstem, in vestibular and oculomotor nuclei, the medial nucleus of the trapezoid in the auditory system, in olfactory bulb, red nucleus, and deep cerebellar nuclei. Detected in thalamus, substantia nigra, and amygdala (at protein level). Highly expressed in the brain and kidney.

The protein resides in the cell membrane. The enzyme catalyses K(+)(in) = K(+)(out). Its activity is regulated as follows. Activated by high intracellular Na(+) level. In addition to activation by Na(+), is cooperatively activated by intracellular Cl(-) levels. Activated upon stimulation of G-protein coupled receptors, such as CHRM1 and GRIA1. In terms of biological role, sodium-activated K(+) channel. Acts as an important mediator of neuronal membrane excitability. Contributes to the delayed outward currents. Regulates neuronal bursting in sensory neurons. Contributes to synaptic development and plasticity. This is Potassium channel subfamily T member 1 (Kcnt1) from Rattus norvegicus (Rat).